The chain runs to 197 residues: Probable UbiX-like flavin prenyltransferase (197 aa).

FMN-binding positions include 9 to 11 (GAT), Ser-36, 87 to 90 (SMKT), and Arg-122.

This sequence belongs to the UbiX/PAD1 family. YclB subfamily. Homododecamer.

The catalysed reaction is dimethylallyl phosphate + FMNH2 = prenylated FMNH2 + phosphate. Flavin prenyltransferase that catalyzes the synthesis of the prenylated FMN cofactor (prenyl-FMN) for phenolic acid decarboxylase C. Involved in the decarboxylation and detoxification of phenolic derivatives under both aerobic and anaerobic conditions. In Escherichia coli, this protein is Probable UbiX-like flavin prenyltransferase (ecdB).